The primary structure comprises 250 residues: Triosephosphate isomerase, cytosolic (250 aa).

Substrate-binding residues include Asn-1 and Lys-3. The active-site Electrophile is the His-87. Catalysis depends on Glu-160, which acts as the Proton acceptor.

It belongs to the triosephosphate isomerase family. Homodimer.

Its subcellular location is the cytoplasm. The catalysed reaction is D-glyceraldehyde 3-phosphate = dihydroxyacetone phosphate. The protein operates within carbohydrate biosynthesis; gluconeogenesis. It functions in the pathway carbohydrate degradation; glycolysis; D-glyceraldehyde 3-phosphate from glycerone phosphate: step 1/1. This chain is Triosephosphate isomerase, cytosolic (TPI1), found in Gracilaria gracilis (Red alga).